The following is a 312-amino-acid chain: Testis-expressed protein 13B (312 aa).

Belongs to the TEX13 family. Testis specific.

The protein is Testis-expressed protein 13B (TEX13B) of Homo sapiens (Human).